Here is a 562-residue protein sequence, read N- to C-terminus: Sesquiterpene synthase (562 aa).

Residues aspartate 315, aspartate 319, and glutamate 467 each coordinate Mg(2+). Residues aspartate 315–aspartate 319 carry the DDXXD motif motif.

It belongs to the terpene synthase family. Tpsa subfamily. It depends on Mg(2+) as a cofactor. The cofactor is Mn(2+).

Its function is as follows. Catalyzes the formation of beta-elemol, guaiol and bulnesol. The protein is Sesquiterpene synthase of Santalum spicatum (Australian sandalwood).